Consider the following 307-residue polypeptide: Probable deoxyhypusine synthase (307 aa).

Catalysis depends on K278, which acts as the Nucleophile.

Belongs to the deoxyhypusine synthase family. NAD(+) is required as a cofactor.

It carries out the reaction [eIF5A protein]-L-lysine + spermidine = [eIF5A protein]-deoxyhypusine + propane-1,3-diamine. The protein operates within protein modification; eIF5A hypusination. In terms of biological role, catalyzes the NAD-dependent oxidative cleavage of spermidine and the subsequent transfer of the butylamine moiety of spermidine to the epsilon-amino group of a specific lysine residue of the eIF-5A precursor protein to form the intermediate deoxyhypusine residue. The sequence is that of Probable deoxyhypusine synthase (dys) from Methanothermobacter thermautotrophicus (strain ATCC 29096 / DSM 1053 / JCM 10044 / NBRC 100330 / Delta H) (Methanobacterium thermoautotrophicum).